The primary structure comprises 425 residues: Zinc finger protein 789 (425 aa).

One can recognise a KRAB domain in the interval 11–82 (LSFEDVAMYF…DLPRTGNRKA (72 aa)). C2H2-type zinc fingers lie at residues 201-223 (YECSECGKVIRRKAWFDQHQRIH), 229-251 (FECKVCGQAFRQRSALTVHKQCH), 257-279 (YRCHDCGKCFRQLAYLVEHKRIH), 285-307 (YKCSKCEKTFSQNSTLIRHQVIH), 313-335 (HKCLECGKAFGRHSTLLCHQQIH), 341-363 (HKCSECGQSFGRNVDLIQHQRIH), 369-391 (FQCGECGKTFSFKRNLFRHQVIH), and 397-419 (YQCVICGKSFKWHTSFIKHQGTH).

The protein belongs to the krueppel C2H2-type zinc-finger protein family.

It is found in the nucleus. In terms of biological role, may be involved in transcriptional regulation. The polypeptide is Zinc finger protein 789 (ZNF789) (Homo sapiens (Human)).